A 339-amino-acid chain; its full sequence is Fructose-1,6-bisphosphatase isozyme 2 (339 aa).

Positions 3–10 are important for interaction with ALDOA; it reads DRSPFETD. Residues valine 18 and 28-32 contribute to the AMP site; that span reads TGELT. Mg(2+)-binding residues include aspartate 69 and glutamate 98. 113–114 contacts AMP; sequence KY. Mg(2+) contacts are provided by aspartate 119, leucine 121, and aspartate 122. Aspartate 122 contributes to the substrate binding site. Arginine 141 is a binding site for AMP. The Nuclear localization signal motif lies at 204–208; the sequence is KKKGK. A substrate-binding site is contributed by 213-216; the sequence is NEGY. 2 positions are modified to phosphotyrosine: tyrosine 216 and tyrosine 219. Substrate is bound by residues 245–249, tyrosine 265, and lysine 275; that span reads YVGSM. A Mg(2+)-binding site is contributed by glutamate 281.

Belongs to the FBPase class 1 family. Homotetramer. Interacts with ALDOA; the interaction blocks inhibition by physiological concentrations of AMP and reduces inhibition by Ca(2+). Interacts with alpha-actinin and F-actin. Mg(2+) serves as cofactor.

The protein resides in the cell junction. Its subcellular location is the cytoplasm. It localises to the nucleus. The protein localises to the myofibril. It is found in the sarcomere. The protein resides in the z line. It carries out the reaction beta-D-fructose 1,6-bisphosphate + H2O = beta-D-fructose 6-phosphate + phosphate. The protein operates within carbohydrate biosynthesis; gluconeogenesis. Subject to complex allosteric regulation. The enzyme can assume an active R-state, or an inactive T-state. Intermediate conformations may exist. AMP acts as an allosteric inhibitor. Fructose 2,6-bisphosphate acts as a competitive inhibitor. Strongly inhibited by Ca(2+). Functionally, catalyzes the hydrolysis of fructose 1,6-bisphosphate to fructose 6-phosphate in the presence of divalent cations and probably participates in glycogen synthesis from carbohydrate precursors, such as lactate. This Oryctolagus cuniculus (Rabbit) protein is Fructose-1,6-bisphosphatase isozyme 2 (FBP2).